The primary structure comprises 343 residues: Dihydroorotate dehydrogenase (quinone) (343 aa).

Residues 61–65 (AGLDK) and Thr-85 each bind FMN. Lys-65 lines the substrate pocket. 110–114 (NRMGF) lines the substrate pocket. Residues Asn-138 and Asn-171 each contribute to the FMN site. Substrate is bound at residue Asn-171. Residue Ser-174 is the Nucleophile of the active site. Asn-176 is a substrate binding site. FMN contacts are provided by Lys-216 and Thr-244. 245–246 (NT) serves as a coordination point for substrate. FMN-binding positions include Gly-267, Gly-296, and 317-318 (YS).

The protein belongs to the dihydroorotate dehydrogenase family. Type 2 subfamily. In terms of assembly, monomer. FMN serves as cofactor.

Its subcellular location is the cell membrane. It carries out the reaction (S)-dihydroorotate + a quinone = orotate + a quinol. The protein operates within pyrimidine metabolism; UMP biosynthesis via de novo pathway; orotate from (S)-dihydroorotate (quinone route): step 1/1. Catalyzes the conversion of dihydroorotate to orotate with quinone as electron acceptor. The chain is Dihydroorotate dehydrogenase (quinone) from Stutzerimonas stutzeri (strain A1501) (Pseudomonas stutzeri).